Consider the following 213-residue polypeptide: uncharacterized protein (213 aa).

This is an uncharacterized protein from Saccharomyces cerevisiae (strain ATCC 204508 / S288c) (Baker's yeast).